The following is a 324-amino-acid chain: dITP/XTP pyrophosphatase (324 aa).

The segment at methionine 1–isoleucine 127 is unknown. Residues leucine 128 to asparagine 324 are NTP pyrophosphatase. Threonine 131–lysine 136 contributes to the substrate binding site. Mg(2+)-binding residues include glutamate 164 and aspartate 193. The Proton acceptor role is filled by aspartate 193. Substrate-binding positions include serine 194, phenylalanine 277–aspartate 280, lysine 300, and histidine 305–arginine 306.

The protein belongs to the HAM1 NTPase family. Homodimer. Mg(2+) is required as a cofactor.

The catalysed reaction is XTP + H2O = XMP + diphosphate + H(+). It carries out the reaction dITP + H2O = dIMP + diphosphate + H(+). It catalyses the reaction ITP + H2O = IMP + diphosphate + H(+). In terms of biological role, pyrophosphatase that catalyzes the hydrolysis of nucleoside triphosphates to their monophosphate derivatives, with a high preference for the non-canonical purine nucleotides XTP (xanthosine triphosphate), dITP (deoxyinosine triphosphate) and ITP. Seems to function as a house-cleaning enzyme that removes non-canonical purine nucleotides from the nucleotide pool, thus preventing their incorporation into DNA/RNA and avoiding chromosomal lesions. This Streptococcus agalactiae serotype III (strain NEM316) protein is dITP/XTP pyrophosphatase.